The following is a 423-amino-acid chain: Maltoporin 1 (423 aa).

The N-terminal stretch at 1-23 is a signal peptide; that stretch reads MNTTLRALSVALAAALIAPSAFA.

It belongs to the porin LamB (TC 1.B.3) family. Homotrimer formed of three 18-stranded antiparallel beta-barrels, containing three independent channels.

Its subcellular location is the cell outer membrane. The enzyme catalyses beta-maltose(in) = beta-maltose(out). Functionally, involved in the transport of maltose and maltodextrins. This chain is Maltoporin 1, found in Klebsiella pneumoniae subsp. pneumoniae (strain ATCC 700721 / MGH 78578).